The chain runs to 225 residues: Probable GTP-binding protein EngB (225 aa).

The EngB-type G domain occupies 40–224; the sequence is GPPEVAFAGR…RAAIVHAVTA (185 aa). GTP contacts are provided by residues 48 to 55, 75 to 79, 102 to 105, 169 to 172, and 203 to 205; these read GRSNVGKS, GRTQE, DMPG, TKAD, and TSS. S55 and T77 together coordinate Mg(2+).

It belongs to the TRAFAC class TrmE-Era-EngA-EngB-Septin-like GTPase superfamily. EngB GTPase family. Mg(2+) serves as cofactor.

Necessary for normal cell division and for the maintenance of normal septation. This is Probable GTP-binding protein EngB from Chelativorans sp. (strain BNC1).